A 336-amino-acid chain; its full sequence is N-acetyl-gamma-glutamyl-phosphate reductase (336 aa).

C148 is a catalytic residue.

This sequence belongs to the NAGSA dehydrogenase family. Type 1 subfamily.

It localises to the cytoplasm. It catalyses the reaction N-acetyl-L-glutamate 5-semialdehyde + phosphate + NADP(+) = N-acetyl-L-glutamyl 5-phosphate + NADPH + H(+). It functions in the pathway amino-acid biosynthesis; L-arginine biosynthesis; N(2)-acetyl-L-ornithine from L-glutamate: step 3/4. Catalyzes the NADPH-dependent reduction of N-acetyl-5-glutamyl phosphate to yield N-acetyl-L-glutamate 5-semialdehyde. This Campylobacter curvus (strain 525.92) protein is N-acetyl-gamma-glutamyl-phosphate reductase.